Reading from the N-terminus, the 96-residue chain is Co-chaperonin GroES (96 aa).

This sequence belongs to the GroES chaperonin family. Heptamer of 7 subunits arranged in a ring. Interacts with the chaperonin GroEL.

It is found in the cytoplasm. Its function is as follows. Together with the chaperonin GroEL, plays an essential role in assisting protein folding. The GroEL-GroES system forms a nano-cage that allows encapsulation of the non-native substrate proteins and provides a physical environment optimized to promote and accelerate protein folding. GroES binds to the apical surface of the GroEL ring, thereby capping the opening of the GroEL channel. The protein is Co-chaperonin GroES of Shewanella amazonensis (strain ATCC BAA-1098 / SB2B).